Consider the following 262-residue polypeptide: Acyl-coenzyme A diphosphatase FITM2 (262 aa).

The Cytoplasmic portion of the chain corresponds to 1 to 23; sequence MEHLERCAWFLRGTLVRATVRRH. Residues 24–44 form a helical membrane-spanning segment; sequence LPWALVAAMLAGSVVKELSPL. The Lumenal segment spans residues 45-57; sequence PESYLSNKRNVLN. Residues 58-78 form a helical membrane-spanning segment; the sequence is VYFVKLAWAWTVCLLLPFIAL. Topologically, residues 79–93 are cytoplasmic; the sequence is TNYHLTGKTSLVLRR. The helical transmembrane segment at 94-114 threads the bilayer; the sequence is LSTLLVGTAIWYICTALFSNI. The Lumenal portion of the chain corresponds to 115–145; the sequence is EHYTGSCYQSPALEGIRQEHRSKQQCHREGG. A helical transmembrane segment spans residues 146 to 166; it reads FWHGFDISGHSFLLTFCALMI. H155 is an active-site residue. Residues 167-190 are Cytoplasmic-facing; that stretch reads VEEMAVLHEVKTDRGHHLHAAITT. Residues 191–211 form a helical membrane-spanning segment; sequence LVVALGFLTFIWVWMFLCTAV. At 212–218 the chain is on the lumenal side; that stretch reads YFHDLTQ. The active site involves H214. A helical membrane pass occupies residues 219 to 239; that stretch reads KVFGTMFGLLGWYGTYGYWYL. Topologically, residues 240–262 are cytoplasmic; sequence KSFSPGLPPQSCSLTLKRDTYKK.

The protein belongs to the FIT family. In terms of tissue distribution, widely expressed, with highest levels in white and brown adipose tissues (at protein level). In the heart, mRNA expression levels do not correlate well with protein levels, suggesting post-transcriptional regulation in this organ.

It localises to the endoplasmic reticulum membrane. The enzyme catalyses an acyl-CoA + H2O = an acyl-4'-phosphopantetheine + adenosine 3',5'-bisphosphate + 2 H(+). It carries out the reaction (9Z)-octadecenoyl-CoA + H2O = S-(9Z-octadecenoyl)-4'-phosphopantetheine + adenosine 3',5'-bisphosphate + 2 H(+). The catalysed reaction is (5Z,8Z,11Z,14Z)-eicosatetraenoyl-CoA + H2O = S-(5Z,8Z,11Z,14Z-eicosatetraenoyl)-4'-phosphopantetheine + adenosine 3',5'-bisphosphate + 2 H(+). It catalyses the reaction hexadecanoyl-CoA + H2O = S-hexadecanoyl-4'-phosphopantetheine + adenosine 3',5'-bisphosphate + 2 H(+). Its function is as follows. Fatty acyl-coenzyme A (CoA) diphosphatase that hydrolyzes fatty acyl-CoA to yield acyl-4'-phosphopantetheine and adenosine 3',5'-bisphosphate. Preferentially hydrolyzes unsaturated long-chain acyl-CoA substrates such as oleoyl-CoA/(9Z)-octadecenoyl-CoA and arachidonoyl-CoA/(5Z,8Z,11Z,14Z)-eicosatetraenoyl-CoA in the endoplasmic reticulum (ER) lumen. This catalytic activity is required for maintaining ER structure and for lipid droplets (LDs) biogenesis, which are lipid storage organelles involved in maintaining lipid and energy homeostasis. Directly binds to diacylglycerol (DAGs) and triacylglycerol, which is also important for LD biogenesis. May support directional budding of nacent LDs from the ER into the cytosol by reducing DAG levels at sites of LD formation. Plays a role in the regulation of cell morphology and cytoskeletal organization. This chain is Acyl-coenzyme A diphosphatase FITM2, found in Mus musculus (Mouse).